A 224-amino-acid chain; its full sequence is Ribosome maturation factor RimP (224 aa).

Positions 194 to 224 are disordered; it reads REGRIPGDDLGSEEAGEQSDETASGEAEDKE. Over residues 203 to 213 the composition is skewed to acidic residues; that stretch reads LGSEEAGEQSD.

This sequence belongs to the RimP family.

The protein localises to the cytoplasm. Its function is as follows. Required for maturation of 30S ribosomal subunits. The protein is Ribosome maturation factor RimP of Brucella anthropi (strain ATCC 49188 / DSM 6882 / CCUG 24695 / JCM 21032 / LMG 3331 / NBRC 15819 / NCTC 12168 / Alc 37) (Ochrobactrum anthropi).